Here is a 349-residue protein sequence, read N- to C-terminus: Transcription elongation factor A protein 3 (349 aa).

Residues 5-82 form the TFIIS N-terminal domain; that stretch reads EELLRIAKKL…RNWKQLLDSP (78 aa). Residues 80–170 form a disordered region; sequence DSPATPKGEK…RTPSSPSSPT (91 aa). The segment covering 101–110 has biased composition (basic and acidic residues); it reads KGLDCSDWKP. Ser-115 bears the Phosphoserine mark. Residues 121-133 show a composition bias toward basic and acidic residues; sequence RVEEPKDRRDSVD. Composition is skewed to low complexity over residues 134-144 and 160-170; these read SKSSATSSPKR and PRTPSSPSSPT. Residue Ser-141 is modified to Phosphoserine. A TFIIS central domain is found at 188–304; it reads VRDKCVEMLS…EHQMAKTGGT (117 aa). The TFIIS-type zinc finger occupies 307–347; sequence DLFQCSKCKKKNCTYNQVQTRSADEPMTTFVLCNECGNRWK. Cys-311, Cys-314, Cys-339, and Cys-342 together coordinate Zn(2+).

The protein belongs to the TFS-II family.

Its subcellular location is the nucleus. Necessary for efficient RNA polymerase II transcription elongation past template-encoded arresting sites. The arresting sites in DNA have the property of trapping a certain fraction of elongating RNA polymerases that pass through, resulting in locked ternary complexes. Cleavage of the nascent transcript by S-II allows the resumption of elongation from the new 3'-terminus. The polypeptide is Transcription elongation factor A protein 3 (TCEA3) (Bos taurus (Bovine)).